Here is a 446-residue protein sequence, read N- to C-terminus: Glucosylglycerate hydrolase (446 aa).

Substrate is bound by residues tyrosine 36, 40-43, tyrosine 88, glutamine 115, and glycine 180; that span reads WSWD. Residue aspartate 182 is the Proton donor of the active site. Residues arginine 216 and 375–376 contribute to the substrate site; that span reads YW. Glutamate 419 functions as the Proton acceptor in the catalytic mechanism. A substrate-binding site is contributed by glutamine 434.

It belongs to the glycosyl hydrolase 63 family. In terms of assembly, homotetramer. Dimer of dimers.

The catalysed reaction is (2R)-2-O-(alpha-D-glucopyranosyl)-glycerate + H2O = (R)-glycerate + D-glucose. With respect to regulation, activity is not dependent on divalent cations, but it is enhanced by Mg(2+). Its function is as follows. Catalyzes the hydrolysis of glucosylglycerate (GG) to glycerate and glucose. Involved in recovery from nitrogen starvation by promoting the rapid mobilization of the glucosylglycerate that accumulates under these conditions. Can also hydrolyze mannosylglycerate (MG), with tenfold lower efficiency. The chain is Glucosylglycerate hydrolase from Mycolicibacterium hassiacum (strain DSM 44199 / CIP 105218 / JCM 12690 / 3849) (Mycobacterium hassiacum).